The primary structure comprises 667 residues: DNA ligase (667 aa).

Residues 34 to 38 (DSEYD), 83 to 84 (SL), and Glu112 each bind NAD(+). The active-site N6-AMP-lysine intermediate is Lys114. 4 residues coordinate NAD(+): Arg135, Glu169, Lys285, and Lys309. Positions 403, 406, 421, and 426 each coordinate Zn(2+). In terms of domain architecture, BRCT spans 589 to 667 (ASDSYFAGKT…EARLISELKK (79 aa)).

It belongs to the NAD-dependent DNA ligase family. LigA subfamily. Requires Mg(2+) as cofactor. Mn(2+) is required as a cofactor.

The catalysed reaction is NAD(+) + (deoxyribonucleotide)n-3'-hydroxyl + 5'-phospho-(deoxyribonucleotide)m = (deoxyribonucleotide)n+m + AMP + beta-nicotinamide D-nucleotide.. Its function is as follows. DNA ligase that catalyzes the formation of phosphodiester linkages between 5'-phosphoryl and 3'-hydroxyl groups in double-stranded DNA using NAD as a coenzyme and as the energy source for the reaction. It is essential for DNA replication and repair of damaged DNA. This is DNA ligase from Bacillus licheniformis (strain ATCC 14580 / DSM 13 / JCM 2505 / CCUG 7422 / NBRC 12200 / NCIMB 9375 / NCTC 10341 / NRRL NRS-1264 / Gibson 46).